Reading from the N-terminus, the 208-residue chain is Putative thymidylate kinase (208 aa).

The segment at 8–15 (GIDGSGVS) is defective ATP-binding.

The protein belongs to the thymidylate kinase family.

The catalysed reaction is dTMP + ATP = dTDP + ADP. The sequence is that of Putative thymidylate kinase (tmk) from Aeropyrum pernix (strain ATCC 700893 / DSM 11879 / JCM 9820 / NBRC 100138 / K1).